Consider the following 414-residue polypeptide: Esterase FrsA (414 aa).

The protein belongs to the FrsA family.

It catalyses the reaction a carboxylic ester + H2O = an alcohol + a carboxylate + H(+). Catalyzes the hydrolysis of esters. The chain is Esterase FrsA from Shigella boydii serotype 18 (strain CDC 3083-94 / BS512).